Reading from the N-terminus, the 155-residue chain is Ribonuclease H (155 aa).

Residues 1–142 (MLKQVEIFTD…CDVLARDAAS (142 aa)) form the RNase H type-1 domain. D10, E48, D70, and D134 together coordinate Mg(2+).

Belongs to the RNase H family. As to quaternary structure, monomer. The cofactor is Mg(2+).

It is found in the cytoplasm. It carries out the reaction Endonucleolytic cleavage to 5'-phosphomonoester.. Functionally, endonuclease that specifically degrades the RNA of RNA-DNA hybrids. The chain is Ribonuclease H from Serratia proteamaculans (strain 568).